A 72-amino-acid polypeptide reads, in one-letter code: uncharacterized protein (72 aa).

The protein belongs to the asfivirus I73R family.

Its subcellular location is the virion. This is an uncharacterized protein from Ornithodoros (relapsing fever ticks).